We begin with the raw amino-acid sequence, 419 residues long: D-galactonate dehydratase family member SEN1436 (419 aa).

Residues Gln-45 and His-129 each coordinate substrate. Tyr-160 serves as the catalytic Proton donor/acceptor. Asp-225 contacts Mg(2+). Residue His-227 is the Proton donor/acceptor of the active site. Residues Glu-251 and Glu-277 each contribute to the Mg(2+) site. Residues Glu-277, Arg-298, His-327, Asp-331, and Glu-354 each coordinate substrate.

Belongs to the mandelate racemase/muconate lactonizing enzyme family. GalD subfamily. In terms of assembly, homotetramer. Mg(2+) is required as a cofactor.

The enzyme catalyses D-gluconate = 2-dehydro-3-deoxy-D-gluconate + H2O. Has low D-gluconate dehydratase activity (in vitro), suggesting that it has no significant role in D-gluconate degradation in vivo. Has no detectable activity with a panel of 70 other acid sugars (in vitro). This chain is D-galactonate dehydratase family member SEN1436, found in Salmonella enteritidis PT4 (strain P125109).